The sequence spans 613 residues: Dihydroxy-acid dehydratase (613 aa).

A Mg(2+)-binding site is contributed by aspartate 81. Residue cysteine 122 participates in [2Fe-2S] cluster binding. Mg(2+) contacts are provided by aspartate 123 and lysine 124. An N6-carboxylysine modification is found at lysine 124. Residue cysteine 195 coordinates [2Fe-2S] cluster. Glutamate 491 contacts Mg(2+). Serine 517 serves as the catalytic Proton acceptor.

This sequence belongs to the IlvD/Edd family. Homodimer. [2Fe-2S] cluster is required as a cofactor. Requires Mg(2+) as cofactor.

It carries out the reaction (2R)-2,3-dihydroxy-3-methylbutanoate = 3-methyl-2-oxobutanoate + H2O. It catalyses the reaction (2R,3R)-2,3-dihydroxy-3-methylpentanoate = (S)-3-methyl-2-oxopentanoate + H2O. Its pathway is amino-acid biosynthesis; L-isoleucine biosynthesis; L-isoleucine from 2-oxobutanoate: step 3/4. It functions in the pathway amino-acid biosynthesis; L-valine biosynthesis; L-valine from pyruvate: step 3/4. In terms of biological role, functions in the biosynthesis of branched-chain amino acids. Catalyzes the dehydration of (2R,3R)-2,3-dihydroxy-3-methylpentanoate (2,3-dihydroxy-3-methylvalerate) into 2-oxo-3-methylpentanoate (2-oxo-3-methylvalerate) and of (2R)-2,3-dihydroxy-3-methylbutanoate (2,3-dihydroxyisovalerate) into 2-oxo-3-methylbutanoate (2-oxoisovalerate), the penultimate precursor to L-isoleucine and L-valine, respectively. This chain is Dihydroxy-acid dehydratase, found in Aliivibrio fischeri (strain ATCC 700601 / ES114) (Vibrio fischeri).